The chain runs to 476 residues: Protein DETOXIFICATION 17 (476 aa).

The next 12 membrane-spanning stretches (helical) occupy residues 29 to 51, 70 to 90, 111 to 131, 140 to 160, 177 to 197, 205 to 225, 252 to 272, 286 to 306, 326 to 346, 363 to 383, 405 to 425, and 431 to 451; these read LWLS…ISVM, FASV…ETLC, FVLL…EQIL, IASV…AYGL, VFVC…LFVL, GAAL…SCYV, IAFP…LLVL, VLSI…GLGG, LAVY…VTVL, IIAY…LDGL, LGSY…HFHI, and WLGI…VTIF.

It belongs to the multi antimicrobial extrusion (MATE) (TC 2.A.66.1) family.

The protein resides in the membrane. The polypeptide is Protein DETOXIFICATION 17 (Arabidopsis thaliana (Mouse-ear cress)).